Here is a 314-residue protein sequence, read N- to C-terminus: Ketimine reductase mu-crystallin (314 aa).

Arg47 is a 3,3',5-triiodo-L-thyronine binding site. NADPH-binding residues include Ser91, His92, Arg119, Ala144, Val146, Gln147, Asn168, Arg169, Thr170, Asn173, Thr205, Met206, and Val226. A 3,3',5-triiodo-L-thyronine-binding site is contributed by Glu257. Ser292 serves as a coordination point for NADPH.

Belongs to the ornithine cyclodeaminase/mu-crystallin family. As to quaternary structure, homodimer. Binds the thyroid hormone triiodothyronine (T3); T3 binding inhibits enzymatic activity. Expressed at high abundance in lens, but outside the lens it is preferentially expressed in neural tissues, retina and brain.

Its subcellular location is the cytoplasm. It catalyses the reaction L-pipecolate + NADP(+) = Delta(1)-piperideine-2-carboxylate + NADPH + H(+). It carries out the reaction L-pipecolate + NAD(+) = Delta(1)-piperideine-2-carboxylate + NADH + H(+). The catalysed reaction is L-proline + NADP(+) = 1-pyrroline-2-carboxylate + NADPH + H(+). The enzyme catalyses L-proline + NAD(+) = 1-pyrroline-2-carboxylate + NADH + H(+). It catalyses the reaction (3R)-1,4-thiomorpholine-3-carboxylate + NAD(+) = 3,4-dehydrothiomorpholine-3-carboxylate + NADH + 2 H(+). It carries out the reaction (3R)-1,4-thiomorpholine-3-carboxylate + NADP(+) = 3,4-dehydrothiomorpholine-3-carboxylate + NADPH + 2 H(+). The catalysed reaction is (S)-cystathionine ketimine + NADH + 2 H(+) = (3R,5S)-2,3,5,6,7-pentahydro-1,4-thiazepine-3,5-dicarboxylate + NAD(+). The enzyme catalyses (S)-cystathionine ketimine + NADPH + 2 H(+) = (3R,5S)-2,3,5,6,7-pentahydro-1,4-thiazepine-3,5-dicarboxylate + NADP(+). It catalyses the reaction (R)-lanthionine ketimine + NADPH + 2 H(+) = (3R,5R)-1,4-thiomorpholine-3,5-dicarboxylate + NADP(+). It carries out the reaction Delta(2)-thiazoline-2-carboxylate + NADPH + 2 H(+) = L-thiazolidine-2-carboxylate + NADP(+). Catalyzes the NAD(P)H-dependent reduction of imine double bonds of a number of cyclic ketimine substrates, including sulfur-containing cyclic ketimines. Under physiological conditions, it efficiently catalyzes delta(1)-piperideine-2-carboxylate (P2C) and delta(1)-pyrroline-2-carboxylate (Pyr2C) reduction, suggesting a central role in lysine and glutamate metabolism. Additional substrates are delta(2)-thiazoline-2-carboxylate (T2C), 3,4-dehydrothiomorpholine-3-carboxylate (AECK), and (R)-lanthionine ketimine (LK) that is reduced at very low rate compared to other substrates. Also catalyzes the NAD(P)H-dependent reduction of (S)-cystathionine ketimine (CysK). The chain is Ketimine reductase mu-crystallin (CRYM) from Macropus fuliginosus (Western gray kangaroo).